The sequence spans 445 residues: Chromosomal replication initiator protein DnaA (445 aa).

The tract at residues 1 to 71 is domain I, interacts with DnaA modulators; it reads MEEVWLQAQS…SVQSLTDSQT (71 aa). Positions 71–108 are domain II; that stretch reads TKIELLIAKPKTEKPKQPAASEVTAAEPEACSGPDHST. A disordered region spans residues 83-106; that stretch reads EKPKQPAASEVTAAEPEACSGPDH. Residues 109–325 form a domain III, AAA+ region region; that stretch reads NLNPKYTFDT…GMLIRLGAVS (217 aa). ATP-binding residues include G153, G155, K156, and T157. Residues 326–445 form a domain IV, binds dsDNA region; that stretch reads SLTGKNITLD…VDTLRKGLLS (120 aa).

Belongs to the DnaA family. In terms of assembly, oligomerizes as a right-handed, spiral filament on DNA at oriC.

The protein resides in the cytoplasm. Its function is as follows. Plays an essential role in the initiation and regulation of chromosomal replication. ATP-DnaA binds to the origin of replication (oriC) to initiate formation of the DNA replication initiation complex once per cell cycle. Binds the DnaA box (a 9 base pair repeat at the origin) and separates the double-stranded (ds)DNA. Forms a right-handed helical filament on oriC DNA; dsDNA binds to the exterior of the filament while single-stranded (ss)DNA is stabiized in the filament's interior. The ATP-DnaA-oriC complex binds and stabilizes one strand of the AT-rich DNA unwinding element (DUE), permitting loading of DNA polymerase. After initiation quickly degrades to an ADP-DnaA complex that is not apt for DNA replication. Binds acidic phospholipids. The sequence is that of Chromosomal replication initiator protein DnaA from Geobacter sulfurreducens (strain ATCC 51573 / DSM 12127 / PCA).